Here is a 41-residue protein sequence, read N- to C-terminus: Large ribosomal subunit protein bL36A (41 aa).

This sequence belongs to the bacterial ribosomal protein bL36 family.

The polypeptide is Large ribosomal subunit protein bL36A (Aeromonas salmonicida (strain A449)).